Here is a 629-residue protein sequence, read N- to C-terminus: MQRSISLTAKRLFVHWNLQGIGNPPTVPSFFNLCGSGCWERSFASASGDYREILRNRLSDIIKVDDAVDLFGDMVKSRPFPSIVEFNKLLSAVAKMNKFELVISLGEQMQTLGISHDLYTYSIFINCFCRRSQLSLALAVLAKMMKLGYEPDIVTLSSLLNGYCHSKRISDAVALVDQMVEMGYKPDTFTFTTLIHGLFLHNKASEAVALVDQMVQRGCQPDLVTYGTVVNGLCKRGDIDLALNLLNKMEAARIKANVVIFNTIIDSLCKYRHVEVAVDLFTEMETKGIRPNVVTYNSLINCLCNYGRWSDASRLLSNMLEKKINPNVVTFNALIDAFFKEGKLVEAEKLHEEMIQRSIDPDTITYNLLINGFCMHNRLDEAKQMFKFMVSKDCLPNIQTYNTLINGFCKCKRVEDGVELFREMSQRGLVGNTVTYTTIIQGFFQAGDCDSAQMVFKQMVSNRVPTDIMTYSILLHGLCSYGKLDTALVIFKYLQKSEMELNIFIYNTMIEGMCKAGKVGEAWDLFCSLSIKPDVVTYNTMISGLCSKRLLQEADDLFRKMKEDGTLPNSGTYNTLIRANLRDCDRAASAELIKEMRSSGFVGDASTISLVTNMLHDGRLDKSFLNMLS.

PPR repeat units lie at residues A46–P81, S82–H116, D117–P151, D152–P186, D187–P221, D222–A256, N257–P291, N292–P326, N327–P361, D362–P396, N397–G431, N432–T466, D467–L501, N502–K532, D534–P568, and N569–G603.

The protein belongs to the PPR family. P subfamily.

This Arabidopsis thaliana (Mouse-ear cress) protein is Pentatricopeptide repeat-containing protein At1g63150.